Here is a 277-residue protein sequence, read N- to C-terminus: Glutamate racemase (277 aa).

Substrate-binding positions include D13–S14 and Y45–G46. C76 serves as the catalytic Proton donor/acceptor. N77 to T78 serves as a coordination point for substrate. Catalysis depends on C186, which acts as the Proton donor/acceptor. T187–H188 serves as a coordination point for substrate.

The protein belongs to the aspartate/glutamate racemases family.

The catalysed reaction is L-glutamate = D-glutamate. The protein operates within cell wall biogenesis; peptidoglycan biosynthesis. Its function is as follows. Provides the (R)-glutamate required for cell wall biosynthesis. This is Glutamate racemase from Ralstonia nicotianae (strain ATCC BAA-1114 / GMI1000) (Ralstonia solanacearum).